The following is a 355-amino-acid chain: UDP-N-acetylglucosamine--N-acetylmuramyl-(pentapeptide) pyrophosphoryl-undecaprenol N-acetylglucosamine transferase (355 aa).

UDP-N-acetyl-alpha-D-glucosamine is bound by residues 15 to 17 (TGG), asparagine 127, arginine 163, serine 191, isoleucine 244, 263 to 268 (ALTVSE), and glutamine 288.

It belongs to the glycosyltransferase 28 family. MurG subfamily.

The protein localises to the cell inner membrane. The enzyme catalyses di-trans,octa-cis-undecaprenyl diphospho-N-acetyl-alpha-D-muramoyl-L-alanyl-D-glutamyl-meso-2,6-diaminopimeloyl-D-alanyl-D-alanine + UDP-N-acetyl-alpha-D-glucosamine = di-trans,octa-cis-undecaprenyl diphospho-[N-acetyl-alpha-D-glucosaminyl-(1-&gt;4)]-N-acetyl-alpha-D-muramoyl-L-alanyl-D-glutamyl-meso-2,6-diaminopimeloyl-D-alanyl-D-alanine + UDP + H(+). The protein operates within cell wall biogenesis; peptidoglycan biosynthesis. In terms of biological role, cell wall formation. Catalyzes the transfer of a GlcNAc subunit on undecaprenyl-pyrophosphoryl-MurNAc-pentapeptide (lipid intermediate I) to form undecaprenyl-pyrophosphoryl-MurNAc-(pentapeptide)GlcNAc (lipid intermediate II). This is UDP-N-acetylglucosamine--N-acetylmuramyl-(pentapeptide) pyrophosphoryl-undecaprenol N-acetylglucosamine transferase from Escherichia coli (strain 55989 / EAEC).